The sequence spans 157 residues: Small ribosomal subunit protein uS7 (157 aa).

The protein belongs to the universal ribosomal protein uS7 family. In terms of assembly, part of the 30S ribosomal subunit. Contacts proteins S9 and S11.

One of the primary rRNA binding proteins, it binds directly to 16S rRNA where it nucleates assembly of the head domain of the 30S subunit. Is located at the subunit interface close to the decoding center, probably blocks exit of the E-site tRNA. This chain is Small ribosomal subunit protein uS7, found in Polaromonas sp. (strain JS666 / ATCC BAA-500).